The primary structure comprises 321 residues: Phospho-N-acetylmuramoyl-pentapeptide-transferase (321 aa).

10 helical membrane passes run 1 to 21 (MIFV…PVLI), 50 to 70 (MGGL…IIFV), 76 to 96 (IILL…DDYI), 112 to 132 (FLAQ…FHLV), 140 to 160 (IPFT…IVFW), 176 to 196 (GLAT…SFVL), 200 to 220 (AIGI…PYNI), 225 to 245 (VFMG…ISIM), 250 to 270 (LSLI…MLQV), and 300 to 320 (VVTV…WIGV).

The protein belongs to the glycosyltransferase 4 family. MraY subfamily. The cofactor is Mg(2+).

The protein localises to the cell membrane. The catalysed reaction is UDP-N-acetyl-alpha-D-muramoyl-L-alanyl-gamma-D-glutamyl-L-lysyl-D-alanyl-D-alanine + di-trans,octa-cis-undecaprenyl phosphate = Mur2Ac(oyl-L-Ala-gamma-D-Glu-L-Lys-D-Ala-D-Ala)-di-trans,octa-cis-undecaprenyl diphosphate + UMP. It participates in cell wall biogenesis; peptidoglycan biosynthesis. Its function is as follows. Catalyzes the initial step of the lipid cycle reactions in the biosynthesis of the cell wall peptidoglycan: transfers peptidoglycan precursor phospho-MurNAc-pentapeptide from UDP-MurNAc-pentapeptide onto the lipid carrier undecaprenyl phosphate, yielding undecaprenyl-pyrophosphoryl-MurNAc-pentapeptide, known as lipid I. In Staphylococcus aureus (strain Mu50 / ATCC 700699), this protein is Phospho-N-acetylmuramoyl-pentapeptide-transferase.